Here is a 350-residue protein sequence, read N- to C-terminus: MSASPTAGQAGLSYRDAGVDIEAGDALVDRIKPFAKRTMREGVMAGIGGFGALFELSKKYQEPVLVSGTDGVGTKLKLAFQLNRHDTVGQDLVAMSVNDILVQGAEPLFFLDYFACGKLDVETAATVIKGIAHGCELAGCALIGGETAEMPSMYPDGEYDLAGFAVGAVEKKKIIDGSTITPGDVVLGLASSGAHSNGYSLVRKIIDVARPNLDADFHGQRLQDAIMAPTRIYVKPLLSLIETLPVKGMAHITGGGLTENVPRVLADNVTAVIQRDAWTLPPLFQWLQAEGRVADAEMHRVFNCGIGMVVIVAKEDAERAIRHLQAAGEAVWQIGEIRERAEGQAQTVVV.

This sequence belongs to the AIR synthase family.

It localises to the cytoplasm. It carries out the reaction 2-formamido-N(1)-(5-O-phospho-beta-D-ribosyl)acetamidine + ATP = 5-amino-1-(5-phospho-beta-D-ribosyl)imidazole + ADP + phosphate + H(+). The protein operates within purine metabolism; IMP biosynthesis via de novo pathway; 5-amino-1-(5-phospho-D-ribosyl)imidazole from N(2)-formyl-N(1)-(5-phospho-D-ribosyl)glycinamide: step 2/2. This chain is Phosphoribosylformylglycinamidine cyclo-ligase, found in Cupriavidus metallidurans (strain ATCC 43123 / DSM 2839 / NBRC 102507 / CH34) (Ralstonia metallidurans).